The chain runs to 143 residues: ATP synthase epsilon chain (143 aa).

The protein belongs to the ATPase epsilon chain family. In terms of assembly, F-type ATPases have 2 components, CF(1) - the catalytic core - and CF(0) - the membrane proton channel. CF(1) has five subunits: alpha(3), beta(3), gamma(1), delta(1), epsilon(1). CF(0) has three main subunits: a, b and c.

Its subcellular location is the cell inner membrane. Functionally, produces ATP from ADP in the presence of a proton gradient across the membrane. This is ATP synthase epsilon chain from Dichelobacter nodosus (strain VCS1703A).